A 139-amino-acid polypeptide reads, in one-letter code: Small integral membrane protein 34 (139 aa).

A helical transmembrane segment spans residues 46–66 (GTSAAWYILTIIGIYAVIFVF).

It is found in the membrane. The polypeptide is Small integral membrane protein 34 (Homo sapiens (Human)).